Here is a 303-residue protein sequence, read N- to C-terminus: Ribonuclease Z (303 aa).

Positions 61, 63, 65, 66, 138, 206, and 265 each coordinate Zn(2+). The Proton acceptor role is filled by Asp-65.

The protein belongs to the RNase Z family. As to quaternary structure, homodimer. Zn(2+) serves as cofactor.

It carries out the reaction Endonucleolytic cleavage of RNA, removing extra 3' nucleotides from tRNA precursor, generating 3' termini of tRNAs. A 3'-hydroxy group is left at the tRNA terminus and a 5'-phosphoryl group is left at the trailer molecule.. Functionally, zinc phosphodiesterase, which displays some tRNA 3'-processing endonuclease activity. Probably involved in tRNA maturation, by removing a 3'-trailer from precursor tRNA. In Agathobacter rectalis (strain ATCC 33656 / DSM 3377 / JCM 17463 / KCTC 5835 / VPI 0990) (Eubacterium rectale), this protein is Ribonuclease Z.